A 188-amino-acid polypeptide reads, in one-letter code: dCTP deaminase (188 aa).

DCTP-binding positions include K111–R116, T135–E137, Q156, Y170, and Q180. E137 (proton donor/acceptor) is an active-site residue.

It belongs to the dCTP deaminase family. In terms of assembly, homotrimer.

The enzyme catalyses dCTP + H2O + H(+) = dUTP + NH4(+). Its pathway is pyrimidine metabolism; dUMP biosynthesis; dUMP from dCTP (dUTP route): step 1/2. Its function is as follows. Catalyzes the deamination of dCTP to dUTP. The protein is dCTP deaminase of Nitrosomonas europaea (strain ATCC 19718 / CIP 103999 / KCTC 2705 / NBRC 14298).